We begin with the raw amino-acid sequence, 813 residues long: Leucine--tRNA ligase (813 aa).

The short motif at 41–51 (PYPSGTLHMGH) is the 'HIGH' region element. The short motif at 575-579 (KMSKS) is the 'KMSKS' region element. Lys578 lines the ATP pocket.

Belongs to the class-I aminoacyl-tRNA synthetase family.

The protein localises to the cytoplasm. The enzyme catalyses tRNA(Leu) + L-leucine + ATP = L-leucyl-tRNA(Leu) + AMP + diphosphate. The sequence is that of Leucine--tRNA ligase from Francisella tularensis subsp. tularensis (strain WY96-3418).